The primary structure comprises 455 residues: Elongation factor Tu, mitochondrial (455 aa).

The N-terminal 46 residues, Met-1–Leu-46, are a transit peptide targeting the mitochondrion. Positions Lys-58–Ala-254 constitute a tr-type G domain. The interval Gly-67 to Thr-74 is G1. GTP-binding residues include Asp-70, Gly-72, Lys-73, Thr-74, and Thr-75. Residue Thr-74 participates in Mg(2+) binding. The residue at position 82 (Lys-82) is an N6-acetyllysine. Lys-91 carries the N6-acetyllysine; alternate modification. Lys-91 carries the post-translational modification N6-succinyllysine; alternate. Residues Gly-108–Asn-112 form a G2 region. Positions Asp-129–Gly-132 are G3. Residues Asn-184, Asp-187, Ser-222, Ala-223, and Leu-224 each coordinate GTP. The G4 stretch occupies residues Asn-184–Asp-187. The tract at residues Ser-222–Leu-224 is G5. An N6-succinyllysine modification is found at Lys-237. Lys-259 bears the N6-acetyllysine mark. Thr-281 is modified (phosphothreonine). Lys-289 is modified (N6-succinyllysine). At Ser-315 the chain carries Phosphoserine. An N6-acetyllysine mark is found at Lys-364 and Lys-421.

This sequence belongs to the TRAFAC class translation factor GTPase superfamily. Classic translation factor GTPase family. EF-Tu/EF-1A subfamily. Interacts with NLRX1. Interacts with ATG16L1. In terms of assembly, (Microbial infection) Interacts with human parainfluenza virus 3 matrix protein; this interaction inhibits RLR-mediated type I interferon production while promoting autophagy. As to quaternary structure, (Microbial infection) Interacts with Hantaan hantavirus glycoprotein N; this interaction contributes to the virus-induced degradation of mitochondria by autophagy, which leads to degradation of MAVS and inhibition of type I interferon (IFN) responses.

It is found in the mitochondrion. The enzyme catalyses GTP + H2O = GDP + phosphate + H(+). Its function is as follows. GTP hydrolase that promotes the GTP-dependent binding of aminoacyl-tRNA to the A-site of ribosomes during protein biosynthesis. Also plays a role in the regulation of autophagy and innate immunity. Recruits ATG5-ATG12 and NLRX1 at mitochondria and serves as a checkpoint of the RIGI-MAVS pathway. In turn, inhibits RLR-mediated type I interferon while promoting autophagy. The sequence is that of Elongation factor Tu, mitochondrial (TUFM) from Homo sapiens (Human).